The chain runs to 302 residues: MAWNVFKFCTALRALGSIMILIVIGIIGFTYYAVVVVNYGPALLIGGVDSLLSVLVLAFFHFLLIMLLWSYFSVVVTDPGGVPTGWRPELDIEKSEGNQALIGEASVGDSSSHGVRYCRKCNQYKPPRSHHCSVCGRCILKMDHHCVWVVNCVGANNYKSFLLFLFYTFLETTVVAVSLLPIFLVFFSDGDGDITVSPGSLAASFVAFVLNIAFALSVLGFLIMHIMLVARNTTTIEAYEKHTVNWPYNVGRKTNFEQVFGSDKMYWFVPLYTEDDKKKLPALGGLDFTSRSESETEPLQSL.

A run of 2 helical transmembrane segments spans residues 17–37 and 56–76; these read SIMI…VVVV and VLAF…SVVV. The region spanning 116 to 166 is the DHHC domain; sequence RYCRKCNQYKPPRSHHCSVCGRCILKMDHHCVWVVNCVGANNYKSFLLFLF. Residue Cys-146 is the S-palmitoyl cysteine intermediate of the active site. The next 2 membrane-spanning stretches (helical) occupy residues 166–186 and 204–224; these read FYTF…FLVF and SFVA…FLIM.

It belongs to the DHHC palmitoyltransferase family.

It localises to the cell membrane. The protein localises to the cytoplasmic vesicle membrane. It catalyses the reaction L-cysteinyl-[protein] + hexadecanoyl-CoA = S-hexadecanoyl-L-cysteinyl-[protein] + CoA. Palmitoyl acyltransferase. This is Probable protein S-acyltransferase 13 (PAT13) from Arabidopsis thaliana (Mouse-ear cress).